The sequence spans 354 residues: Peptide chain release factor 1 (354 aa).

An N5-methylglutamine modification is found at glutamine 231. Residues 284 to 304 show a composition bias toward basic and acidic residues; it reads EALAKDRKEQVGSGDRSERIR. Residues 284–308 are disordered; sequence EALAKDRKEQVGSGDRSERIRTYNF.

The protein belongs to the prokaryotic/mitochondrial release factor family. Post-translationally, methylated by PrmC. Methylation increases the termination efficiency of RF1.

Its subcellular location is the cytoplasm. In terms of biological role, peptide chain release factor 1 directs the termination of translation in response to the peptide chain termination codons UAG and UAA. The polypeptide is Peptide chain release factor 1 (Nitratiruptor sp. (strain SB155-2)).